We begin with the raw amino-acid sequence, 201 residues long: Imidazole glycerol phosphate synthase subunit HisH (201 aa).

A Glutamine amidotransferase type-1 domain is found at 1 to 201 (MIAIIDYGAG…LLKRYEEMIR (201 aa)). Catalysis depends on Cys79, which acts as the Nucleophile. Residues His181 and Glu183 contribute to the active site.

Heterodimer of HisH and HisF.

The protein resides in the cytoplasm. The catalysed reaction is 5-[(5-phospho-1-deoxy-D-ribulos-1-ylimino)methylamino]-1-(5-phospho-beta-D-ribosyl)imidazole-4-carboxamide + L-glutamine = D-erythro-1-(imidazol-4-yl)glycerol 3-phosphate + 5-amino-1-(5-phospho-beta-D-ribosyl)imidazole-4-carboxamide + L-glutamate + H(+). It carries out the reaction L-glutamine + H2O = L-glutamate + NH4(+). The protein operates within amino-acid biosynthesis; L-histidine biosynthesis; L-histidine from 5-phospho-alpha-D-ribose 1-diphosphate: step 5/9. IGPS catalyzes the conversion of PRFAR and glutamine to IGP, AICAR and glutamate. The HisH subunit catalyzes the hydrolysis of glutamine to glutamate and ammonia as part of the synthesis of IGP and AICAR. The resulting ammonia molecule is channeled to the active site of HisF. The polypeptide is Imidazole glycerol phosphate synthase subunit HisH (Oceanobacillus iheyensis (strain DSM 14371 / CIP 107618 / JCM 11309 / KCTC 3954 / HTE831)).